Consider the following 144-residue polypeptide: Large ribosomal subunit protein uL16c (144 aa).

Belongs to the universal ribosomal protein uL16 family. In terms of assembly, part of the 50S ribosomal subunit.

Its subcellular location is the plastid. It is found in the chloroplast. The protein is Large ribosomal subunit protein uL16c of Chara vulgaris (Common stonewort).